Here is a 115-residue protein sequence, read N- to C-terminus: Putative ethidium bromide resistance protein (115 aa).

The next 4 helical transmembrane spans lie at 4-21 (WLFLVIAIVGEVIATSAL), 30-47 (LAPSAVVIIGYGIAFYFL), 58-79 (VAYAVWSGLGVVIITAIAWLLH), and 85-104 (AWGFVGMGLIIAAFLLARSP).

This sequence belongs to the drug/metabolite transporter (DMT) superfamily. Small multidrug resistance (SMR) (TC 2.A.7.1) family.

The protein localises to the cell membrane. Its function is as follows. One of the determinants for resistance to ethidium bromide and quaternary ammonium compounds. In Escherichia coli, this protein is Putative ethidium bromide resistance protein (ebr).